The chain runs to 106 residues: NADH-quinone oxidoreductase subunit K (106 aa).

Transmembrane regions (helical) follow at residues 10-30 (VTYI…GVLI), 34-54 (IVII…VFVT), and 67-87 (IVFF…ALVI).

The protein belongs to the complex I subunit 4L family. In terms of assembly, NDH-1 is composed of 14 different subunits. Subunits NuoA, H, J, K, L, M, N constitute the membrane sector of the complex.

The protein resides in the cell inner membrane. The enzyme catalyses a quinone + NADH + 5 H(+)(in) = a quinol + NAD(+) + 4 H(+)(out). Functionally, NDH-1 shuttles electrons from NADH, via FMN and iron-sulfur (Fe-S) centers, to quinones in the respiratory chain. The immediate electron acceptor for the enzyme in this species is believed to be ubiquinone. Couples the redox reaction to proton translocation (for every two electrons transferred, four hydrogen ions are translocated across the cytoplasmic membrane), and thus conserves the redox energy in a proton gradient. The chain is NADH-quinone oxidoreductase subunit K from Leptospira biflexa serovar Patoc (strain Patoc 1 / Ames).